A 1070-amino-acid chain; its full sequence is Isoleucine--tRNA ligase (1070 aa).

The 'HIGH' region signature appears at 50-60 (PYTSGAAHMGT). A 'KMSKS' region motif is present at residues 606–610 (GMSKS). Lys-609 lines the ATP pocket.

The protein belongs to the class-I aminoacyl-tRNA synthetase family. IleS type 2 subfamily. Monomer. The cofactor is Zn(2+).

The protein resides in the cytoplasm. It catalyses the reaction tRNA(Ile) + L-isoleucine + ATP = L-isoleucyl-tRNA(Ile) + AMP + diphosphate. In terms of biological role, catalyzes the attachment of isoleucine to tRNA(Ile). As IleRS can inadvertently accommodate and process structurally similar amino acids such as valine, to avoid such errors it has two additional distinct tRNA(Ile)-dependent editing activities. One activity is designated as 'pretransfer' editing and involves the hydrolysis of activated Val-AMP. The other activity is designated 'posttransfer' editing and involves deacylation of mischarged Val-tRNA(Ile). The sequence is that of Isoleucine--tRNA ligase from Halobacterium salinarum (strain ATCC 700922 / JCM 11081 / NRC-1) (Halobacterium halobium).